The sequence spans 308 residues: HTH-type transcriptional activator AllS (308 aa).

In terms of domain architecture, HTH lysR-type spans 2-59; the sequence is FDPETLRTFIAVAETGSFSKAAERLCKTTATISYRIKLLEENTGVALFFRTTRSVTLT. The segment at residues 19–38 is a DNA-binding region (H-T-H motif); the sequence is FSKAAERLCKTTATISYRIK.

Belongs to the LysR transcriptional regulatory family.

Its function is as follows. Positive regulator essential for the expression of AllD operon. Binds to the AllD promoter. This is HTH-type transcriptional activator AllS (allS) from Escherichia coli O157:H7.